Reading from the N-terminus, the 267-residue chain is MAAIVWKGFISFGLVSFPVRLNAAARPETIHFHMLHKKDESRVKEVWYCADENKPIDRAEIVKGYEVRKGEYVVIEDEDLKKIAPPTATTMDILQFVKSDQVDPIYFESSYYVGAEEGGGKAYALFVAALDATKEDAIAKLSMHNREHIVLIRASDNALVLHTLYYPNELHKANRSETPKTKYTAKELELAQSLVSQLTAPFKPQEFHDEYRENVEHLIEQKRKGGKITAVKQPRKAPVIDLMEALKRSVKAAESKRKKPAGKRKAA.

The Ku domain maps to 10 to 190 (ISFGLVSFPV…TKYTAKELEL (181 aa)).

It belongs to the prokaryotic Ku family. In terms of assembly, homodimer. Interacts with LigD.

Functionally, with LigD forms a non-homologous end joining (NHEJ) DNA repair enzyme, which repairs dsDNA breaks with reduced fidelity. Binds linear dsDNA with 5'- and 3'- overhangs but not closed circular dsDNA nor ssDNA. Recruits and stimulates the ligase activity of LigD. The sequence is that of Non-homologous end joining protein Ku from Solibacter usitatus (strain Ellin6076).